Reading from the N-terminus, the 411-residue chain is Corticotropin-releasing factor receptor 2 (411 aa).

Residues 1–19 (MDAALLLSLLEANCSLALA) constitute a signal peptide (not cleaved). The Extracellular segment spans residues 1 to 108 (MDAALLLSLL…EPILDDKQRK (108 aa)). Residues N13, N41, N74, N86, and N94 are each glycosylated (N-linked (GlcNAc...) asparagine). Intrachain disulfides connect C14/C50, C40/C83, and C64/C98. A helical membrane pass occupies residues 109–139 (YDLHYRIALIVNYLGHCVSVVALVAAFLLFL). Residues 140 to 146 (VLRSIRC) are Cytoplasmic-facing. Residues 147 to 171 (LRNVIHWNLITTFILRNIAWFLLQL) traverse the membrane as a helical segment. Residues 172-185 (IDHEVHEGNEVWCR) are Extracellular-facing. A disulfide bond links C184 and C254. A helical transmembrane segment spans residues 186–214 (CITTIFNYFVVTNFFWMFVEGCYLHTAIV). At 215 to 221 (MTYSTEH) the chain is on the cytoplasmic side. The helical transmembrane segment at 222–249 (LRKWLFLFIGWCIPCPIIIAWAVGKLYY) threads the bilayer. At 250–265 (ENEQCWFGKEAGDLVD) the chain is on the extracellular side. The helical transmembrane segment at 266–291 (YIYQGPVMLVLLINFVFLFNIVRILM) threads the bilayer. The Cytoplasmic segment spans residues 292 to 302 (TKLRASTTSET). The chain crosses the membrane as a helical span at residues 303–327 (IQYRKAVKATLVLLPLLGITYMLFF). Over 328 to 334 (VNPGEDD) the chain is Extracellular. Residues 335–364 (LSQIVFIYFNSFLQSFQGFFVSVFYCFFNG) form a helical membrane-spanning segment. The Cytoplasmic segment spans residues 365 to 411 (EVRAALRKRWHRWQDHHALRVPVARAMSIPTSPTRISFHSIKQTAAV).

Belongs to the G-protein coupled receptor 2 family. Monomer. Interacts with CRF, UCN, UCN2 and UCN3. Post-translationally, a N-glycosylation site within the signal peptide impedes its proper cleavage and function. As to expression, highly expressed in the heart. Also expressed in lungs, skeletal muscle, gastrointestinal tract, epididymis, and brain.

The protein resides in the cell membrane. G-protein coupled receptor for CRH (corticotropin-releasing factor), UCN (urocortin), UCN2 and UCN3. Has high affinity for UCN. Ligand binding causes a conformation change that triggers signaling via guanine nucleotide-binding proteins (G proteins) and down-stream effectors, such as adenylate cyclase. Promotes the activation of adenylate cyclase, leading to increased intracellular cAMP levels. In Mus musculus (Mouse), this protein is Corticotropin-releasing factor receptor 2 (Crhr2).